The primary structure comprises 570 residues: Proline--tRNA ligase (570 aa).

This sequence belongs to the class-II aminoacyl-tRNA synthetase family. ProS type 1 subfamily. In terms of assembly, homodimer.

The protein resides in the cytoplasm. It carries out the reaction tRNA(Pro) + L-proline + ATP = L-prolyl-tRNA(Pro) + AMP + diphosphate. In terms of biological role, catalyzes the attachment of proline to tRNA(Pro) in a two-step reaction: proline is first activated by ATP to form Pro-AMP and then transferred to the acceptor end of tRNA(Pro). As ProRS can inadvertently accommodate and process non-cognate amino acids such as alanine and cysteine, to avoid such errors it has two additional distinct editing activities against alanine. One activity is designated as 'pretransfer' editing and involves the tRNA(Pro)-independent hydrolysis of activated Ala-AMP. The other activity is designated 'posttransfer' editing and involves deacylation of mischarged Ala-tRNA(Pro). The misacylated Cys-tRNA(Pro) is not edited by ProRS. The sequence is that of Proline--tRNA ligase from Shewanella oneidensis (strain ATCC 700550 / JCM 31522 / CIP 106686 / LMG 19005 / NCIMB 14063 / MR-1).